Consider the following 515-residue polypeptide: MDEFHRCGKEDSFWQQCFLYPLFFQEDLYAISHDHYLDVSSSSRPMEHLSSNDQLSFLTVKRLIGQIRQQNHSIVLFVNCDPNPLADRKKSFYSESVLEALTLVLEVPFSIWSKSSVEGMNECKSFRSIHSIFPFLEDKFPHSNSILDARIPYSIHPEILVRTFRRWIRDAPSLHPLRSVLYDYRNSPENLQRSIIVVPRVNTRFFLFLLNYYVCECESILFSRLKRSSHSRSLSHGSFPQRTHFHRKIKHIIIFSRRNSLKSIWSLKDPKIHYVRYGERPIIAIKGADLLVKKCRYYLLIFRQFYFHLWSEPYRVCSHQLSKNCSSSPGYFLRVRMNPLLVRTKTLDELFIPVLITNEMDPIVPIVPIIGLLATEKFCDISGRPISKLSWTSLTDDDILDRFDQIWRNLFHYYSGSFDRDGLYRIKYILLLSCAKTLACKHKSTIRVVRKELGPELFKKSFSKEREFDSLPFSSKAAARSQRERIWHSDIPQINPLANSWQKIQDLKIENLFDQ.

This sequence belongs to the intron maturase 2 family. MatK subfamily.

It localises to the plastid. Its subcellular location is the chloroplast. In terms of biological role, usually encoded in the trnK tRNA gene intron. Probably assists in splicing its own and other chloroplast group II introns. This is Maturase K from Pinus luchuensis (Ryukyu island pine).